Here is a 316-residue protein sequence, read N- to C-terminus: Retron Ec73 putative ribosyltransferase/DNA-binding protein (316 aa).

Its function is as follows. Possible ribosyltransferase/DNA-binding component of antiviral defense system retron Ec73, composed of a non-coding RNA (ncRNA) followed by this protein then a reverse transcriptase (RT). Expression of this retron confers protection against bacteriophages SECphi4, SECphi6, SECphi27 and P1. At multiplicity of infection (MOI) of 0.02 cultures grow normally when infected with SECphi4 without collapsing, at MOI 2 cultures enter growth stasis. The polypeptide is Retron Ec73 putative ribosyltransferase/DNA-binding protein (Escherichia coli).